The primary structure comprises 626 residues: METKQFKAESKRLLDLMINSIYTHKEIFLRELISNSSDAMDKIYYKTLTEDSLKFERDDYYIKVVFDKENRVLKIADTGIGMTKEELENNLGVIAKSGSLQFKKENEVKEGYDIIGQFGVGFYSAFLVSDDVTVISKAFGSNEAYKWNSKGAEGYTIEPCEKEAYGTEIILKIKDNTEEENYDEFLDEYTLKSIIKKYSDFIRYPIKMDLTKTKPKEDNKEEFEEYKEEETINSMVPIWRKNKNELKAEDYENFYAEKHYGFDKPIKYIHTSVDGVVSYNAILFIPETTPYDFYTKEYEKGLELYSSGVLIMNKCGDLLPDYFGFVKGIVDSEDLSLNISREILQHDRQLKLIAKNIKTKIKNELESLLKKERDKYEKFYESFGRQLKYGVYSDFGSNKDILQDLLMFYSSKEKKMVTLAEYVSRMPEDQKYIYYAVGESNERIEKLPQIEGVLDKGYEVLYFTDDIDEFAIKMLMNYKEKEFKSVSSGDLGIEGEEKENTSSSDDKENKELFESMKDILSGKVKDVRASKRLKNHPVCLANEGELSIEMEKVLNAMPNNQNIKADKVLEININHDVFKPLKEAYEGDKEKLKLYTDLLYNQALLIEGLTINDPVEFTNNICKIMK.

The segment at 1-341 (METKQFKAES…SEDLSLNISR (341 aa)) is a; substrate-binding. Residues 342–552 (EILQHDRQLK…EGELSIEMEK (211 aa)) are b. The interval 490–509 (DLGIEGEEKENTSSSDDKEN) is disordered. The span at 498-509 (KENTSSSDDKEN) shows a compositional bias: basic and acidic residues. Residues 553 to 626 (VLNAMPNNQN…FTNNICKIMK (74 aa)) are c.

Belongs to the heat shock protein 90 family. In terms of assembly, homodimer.

Its subcellular location is the cytoplasm. Functionally, molecular chaperone. Has ATPase activity. In Clostridium botulinum (strain Loch Maree / Type A3), this protein is Chaperone protein HtpG.